A 304-amino-acid polypeptide reads, in one-letter code: GTP cyclohydrolase FolE2 (304 aa).

The protein belongs to the GTP cyclohydrolase IV family.

It catalyses the reaction GTP + H2O = 7,8-dihydroneopterin 3'-triphosphate + formate + H(+). The protein operates within cofactor biosynthesis; 7,8-dihydroneopterin triphosphate biosynthesis; 7,8-dihydroneopterin triphosphate from GTP: step 1/1. Functionally, converts GTP to 7,8-dihydroneopterin triphosphate. This Chromohalobacter salexigens (strain ATCC BAA-138 / DSM 3043 / CIP 106854 / NCIMB 13768 / 1H11) protein is GTP cyclohydrolase FolE2.